The sequence spans 111 residues: Cytochrome b-c1 complex subunit 7 (111 aa).

Position 2 is an N-acetylalanine (Ala2). Lys12 carries the N6-acetyllysine; alternate modification. Residue Lys12 is modified to N6-succinyllysine; alternate. Lys19 is modified (N6-acetyllysine). Lys78 bears the N6-acetyllysine; alternate mark. An N6-succinyllysine; alternate modification is found at Lys78. An N6-acetyllysine mark is found at Lys83 and Lys96.

Belongs to the UQCRB/QCR7 family. As to quaternary structure, component of the ubiquinol-cytochrome c oxidoreductase (cytochrome b-c1 complex, complex III, CIII), a multisubunit enzyme composed of 11 subunits. The complex is composed of 3 respiratory subunits cytochrome b, cytochrome c1 and Rieske protein UQCRFS1, 2 core protein subunits UQCRC1/QCR1 and UQCRC2/QCR2, and 6 low-molecular weight protein subunits UQCRH/QCR6, UQCRB/QCR7, UQCRQ/QCR8, UQCR10/QCR9, UQCR11/QCR10 and subunit 9, the cleavage product of Rieske protein UQCRFS1. The complex exists as an obligatory dimer and forms supercomplexes (SCs) in the inner mitochondrial membrane with NADH-ubiquinone oxidoreductase (complex I, CI) and cytochrome c oxidase (complex IV, CIV), resulting in different assemblies (supercomplex SCI(1)III(2)IV(1) and megacomplex MCI(2)III(2)IV(2)).

The protein resides in the mitochondrion inner membrane. Functionally, component of the ubiquinol-cytochrome c oxidoreductase, a multisubunit transmembrane complex that is part of the mitochondrial electron transport chain which drives oxidative phosphorylation. The respiratory chain contains 3 multisubunit complexes succinate dehydrogenase (complex II, CII), ubiquinol-cytochrome c oxidoreductase (cytochrome b-c1 complex, complex III, CIII) and cytochrome c oxidase (complex IV, CIV), that cooperate to transfer electrons derived from NADH and succinate to molecular oxygen, creating an electrochemical gradient over the inner membrane that drives transmembrane transport and the ATP synthase. The cytochrome b-c1 complex catalyzes electron transfer from ubiquinol to cytochrome c, linking this redox reaction to translocation of protons across the mitochondrial inner membrane, with protons being carried across the membrane as hydrogens on the quinol. In the process called Q cycle, 2 protons are consumed from the matrix, 4 protons are released into the intermembrane space and 2 electrons are passed to cytochrome c. The polypeptide is Cytochrome b-c1 complex subunit 7 (UQCRB) (Homo sapiens (Human)).